We begin with the raw amino-acid sequence, 484 residues long: Sucrose-6-phosphate hydrolase (484 aa).

Substrate contacts are provided by residues 48 to 51 (LLND), glutamine 67, 110 to 111 (YS), 168 to 169 (RD), and glutamate 223. Aspartate 51 is an active-site residue.

The protein belongs to the glycosyl hydrolase 32 family.

The protein resides in the cytoplasm. The enzyme catalyses Hydrolysis of terminal non-reducing beta-D-fructofuranoside residues in beta-D-fructofuranosides.. Its pathway is glycan biosynthesis; sucrose metabolism. In terms of biological role, enables the bacterium to metabolize sucrose as a sole carbon source. In Vibrio alginolyticus, this protein is Sucrose-6-phosphate hydrolase (scrB).